Reading from the N-terminus, the 282-residue chain is Bifunctional protein FolD (282 aa).

NADP(+) contacts are provided by residues 165–167 (GAS) and isoleucine 231.

The protein belongs to the tetrahydrofolate dehydrogenase/cyclohydrolase family. As to quaternary structure, homodimer.

The catalysed reaction is (6R)-5,10-methylene-5,6,7,8-tetrahydrofolate + NADP(+) = (6R)-5,10-methenyltetrahydrofolate + NADPH. It carries out the reaction (6R)-5,10-methenyltetrahydrofolate + H2O = (6R)-10-formyltetrahydrofolate + H(+). It participates in one-carbon metabolism; tetrahydrofolate interconversion. Its function is as follows. Catalyzes the oxidation of 5,10-methylenetetrahydrofolate to 5,10-methenyltetrahydrofolate and then the hydrolysis of 5,10-methenyltetrahydrofolate to 10-formyltetrahydrofolate. The protein is Bifunctional protein FolD of Francisella philomiragia subsp. philomiragia (strain ATCC 25017 / CCUG 19701 / FSC 153 / O#319-036).